We begin with the raw amino-acid sequence, 366 residues long: DNA double-strand break repair protein Mre11 (366 aa).

Mn(2+) is bound by residues Asp-8, His-10, Asp-49, and Asn-84. His-85 functions as the Proton donor in the catalytic mechanism. Positions 158, 186, and 188 each coordinate Mn(2+).

Belongs to the MRE11/RAD32 family. Homodimer. Forms a heterotetramer composed of two Mre11 subunits and two Rad50 subunits. Requires Mn(2+) as cofactor.

Nuclease activity is regulated by Rad50. Part of the Rad50/Mre11 complex, which is involved in the early steps of DNA double-strand break (DSB) repair. The complex may facilitate opening of the processed DNA ends to aid in the recruitment of HerA and NurA. Mre11 binds to DSB ends and has both double-stranded 3'-5' exonuclease activity and single-stranded endonuclease activity. This Methanocaldococcus jannaschii (strain ATCC 43067 / DSM 2661 / JAL-1 / JCM 10045 / NBRC 100440) (Methanococcus jannaschii) protein is DNA double-strand break repair protein Mre11.